We begin with the raw amino-acid sequence, 210 residues long: Somatotropin-2 (210 aa).

The N-terminal stretch at 1–22 (MGQVFLLMPVLLVSCFLSQGAA) is a signal peptide. Histidine 38 contributes to the Zn(2+) binding site. A disulfide bond links cysteine 71 and cysteine 183. Glutamate 192 serves as a coordination point for Zn(2+). Cysteine 200 and cysteine 208 form a disulfide bridge.

It belongs to the somatotropin/prolactin family.

The protein localises to the secreted. Its function is as follows. Growth hormone plays an important role in growth control and is involved in the regulation of several anabolic processes. Implicated as an osmoregulatory substance important for seawater adaptation. This chain is Somatotropin-2 (gh2), found in Oncorhynchus nerka (Sockeye salmon).